A 1088-amino-acid polypeptide reads, in one-letter code: MRNLGLLEITLLCSLFVYFRIDSVSSLNSDGLALLSLLKHFDKVPLEVASTWKENTSETTPCNNNWFGVICDLSGNVVETLNLSASGLSGQLGSEIGELKSLVTLDLSLNSFSGLLPSTLGNCTSLEYLDLSNNDFSGEVPDIFGSLQNLTFLYLDRNNLSGLIPASVGGLIELVDLRMSYNNLSGTIPELLGNCSKLEYLALNNNKLNGSLPASLYLLENLGELFVSNNSLGGRLHFGSSNCKKLVSLDLSFNDFQGGVPPEIGNCSSLHSLVMVKCNLTGTIPSSMGMLRKVSVIDLSDNRLSGNIPQELGNCSSLETLKLNDNQLQGEIPPALSKLKKLQSLELFFNKLSGEIPIGIWKIQSLTQMLVYNNTLTGELPVEVTQLKHLKKLTLFNNGFYGDIPMSLGLNRSLEEVDLLGNRFTGEIPPHLCHGQKLRLFILGSNQLHGKIPASIRQCKTLERVRLEDNKLSGVLPEFPESLSLSYVNLGSNSFEGSIPRSLGSCKNLLTIDLSQNKLTGLIPPELGNLQSLGLLNLSHNYLEGPLPSQLSGCARLLYFDVGSNSLNGSIPSSFRSWKSLSTLVLSDNNFLGAIPQFLAELDRLSDLRIARNAFGGKIPSSVGLLKSLRYGLDLSANVFTGEIPTTLGALINLERLNISNNKLTGPLSVLQSLKSLNQVDVSYNQFTGPIPVNLLSNSSKFSGNPDLCIQASYSVSAIIRKEFKSCKGQVKLSTWKIALIAAGSSLSVLALLFALFLVLCRCKRGTKTEDANILAEEGLSLLLNKVLAATDNLDDKYIIGRGAHGVVYRASLGSGEEYAVKKLIFAEHIRANQNMKREIETIGLVRHRNLIRLERFWMRKEDGLMLYQYMPNGSLHDVLHRGNQGEAVLDWSARFNIALGISHGLAYLHHDCHPPIIHRDIKPENILMDSDMEPHIGDFGLARILDDSTVSTATVTGTTGYIAPENAYKTVRSKESDVYSYGVVLLELVTGKRALDRSFPEDINIVSWVRSVLSSYEDEDDTAGPIVDPKLVDELLDTKLREQAIQVTDLALRCTDKRPENRPSMRDVVKDLTDLESFVRSTSGSVH.

The signal sequence occupies residues 1-26 (MRNLGLLEITLLCSLFVYFRIDSVSS). Topologically, residues 27–739 (LNSDGLALLS…QVKLSTWKIA (713 aa)) are extracellular. Asn-55, Asn-82, and Asn-122 each carry an N-linked (GlcNAc...) asparagine glycan. 26 LRR repeats span residues 75–99 (GNVVETLNLSASGLSGQLGSEIGEL), 100–122 (KSLVTLDLSLNSFSGLLPSTLGN), 123–146 (CTSLEYLDLSNNDFSGEVPDIFGS), 147–170 (LQNLTFLYLDRNNLSGLIPASVGG), 172–194 (IELVDLRMSYNNLSGTIPELLGN), 195–219 (CSKLEYLALNNNKLNGSLPASLYLL), 221–243 (NLGELFVSNNSLGGRLHFGSSNC), 244–267 (KKLVSLDLSFNDFQGGVPPEIGNC), 269–291 (SLHSLVMVKCNLTGTIPSSMGML), 292–315 (RKVSVIDLSDNRLSGNIPQELGNC), 316–339 (SSLETLKLNDNQLQGEIPPALSKL), 341–363 (KLQSLELFFNKLSGEIPIGIWKI), 365–387 (SLTQMLVYNNTLTGELPVEVTQL), 388–411 (KHLKKLTLFNNGFYGDIPMSLGLN), 412–435 (RSLEEVDLLGNRFTGEIPPHLCHG), 436–459 (QKLRLFILGSNQLHGKIPASIRQC), 460–485 (KTLERVRLEDNKLSGVLPEFPESLSL), 487–506 (YVNLGSNSFEGSIPRSLGSC), 507–529 (KNLLTIDLSQNKLTGLIPPELGN), 530–554 (LQSLGLLNLSHNYLEGPLPSQLSGC), 556–577 (RLLYFDVGSNSLNGSIPSSFRS), 578–602 (WKSLSTLVLSDNNFLGAIPQFLAEL), 603–627 (DRLSDLRIARNAFGGKIPSSVGLLK), 629–651 (LRYGLDLSANVFTGEIPTTLGAL), 652–676 (INLERLNISNNKLTGPLSVLQSLKS), and 678–698 (NQVDVSYNQFTGPIPVNLLSN). Asn-149, Asn-159, Asn-183, Asn-194, Asn-209, Asn-229, Asn-266, Asn-279, and Asn-314 each carry an N-linked (GlcNAc...) asparagine glycan. Residues Asn-373 and Asn-411 are each glycosylated (N-linked (GlcNAc...) asparagine). N-linked (GlcNAc...) asparagine glycans are attached at residues Asn-537 and Asn-568. Residues Asn-658 and Asn-698 are each glycosylated (N-linked (GlcNAc...) asparagine). The helical transmembrane segment at 740–760 (LIAAGSSLSVLALLFALFLVL) threads the bilayer. At 761-1088 (CRCKRGTKTE…FVRSTSGSVH (328 aa)) the chain is on the cytoplasmic side. At Thr-791 the chain carries Phosphothreonine. Positions 794 to 1080 (LDDKYIIGRG…KDLTDLESFV (287 aa)) constitute a Protein kinase domain. ATP is bound by residues 800 to 808 (IGRGAHGVV) and Lys-822. Phosphotyrosine is present on residues Tyr-868 and Tyr-908. The active-site Proton acceptor is Asp-921. Phosphotyrosine occurs at positions 962 and 969.

Belongs to the protein kinase superfamily. Ser/Thr protein kinase family. As to quaternary structure, interacts with BAK1. Interacts with CLE14.

Its subcellular location is the cell membrane. It catalyses the reaction L-seryl-[protein] + ATP = O-phospho-L-seryl-[protein] + ADP + H(+). The enzyme catalyses L-threonyl-[protein] + ATP = O-phospho-L-threonyl-[protein] + ADP + H(+). Its function is as follows. Acts as a receptor for PEP defense peptides. Unlike typical immune receptors, senses an endogenous elicitor that potentiates PAMP-inducible plant responses. The chain is Leucine-rich repeat receptor-like protein kinase PEPR2 (PEPR2) from Arabidopsis thaliana (Mouse-ear cress).